A 522-amino-acid polypeptide reads, in one-letter code: Leucine-rich repeat transmembrane neuronal protein 1 (522 aa).

Positions 1–34 (MDFLLLGLCLYWLLRRPSGVVLCLLGACFQMLPA) are cleaved as a signal peptide. Residues 35-63 (APSGCPQLCRCEGRLLYCEALNPTEAPHN) form the LRRNT domain. Over 35–427 (APSGCPQLCR…HAENAVQIHK (393 aa)) the chain is Extracellular. An N-linked (GlcNAc...) asparagine glycan is attached at N63. 10 LRR repeats span residues 64 to 87 (LSGL…QFTG), 89 to 111 (MQLT…AFQK), 112 to 135 (LRRV…TFRP), 137 to 159 (PNLR…LFHG), 161 to 183 (RKLT…IFQD), 184 to 207 (CRSL…SFAG), 209 to 231 (FKLT…HFPR), 233 to 255 (ISLH…LDWV), 256 to 278 (WNLK…VFET), and 279 to 302 (VPHL…ILNS). N130 is a glycosylation site (N-linked (GlcNAc...) asparagine). Positions 314 to 365 (NLWDCGRNVCALASWLSNFQGRYDGNLQCASPEYAQGEDVLDAVYAFHLCED) constitute an LRRCT domain. An N-linked (GlcNAc...) asparagine glycan is attached at N380. Residues 382 to 401 (SDLGPPASSATTLADGGEGQ) are disordered. A helical membrane pass occupies residues 428–448 (VVTGTMALIFSFLIVVLVLYV). Topologically, residues 449-522 (SWKCFPASLR…HQQPARECEV (74 aa)) are cytoplasmic.

It belongs to the LRRTM family.

The protein resides in the cell membrane. The protein localises to the postsynaptic cell membrane. Functionally, exhibits strong synaptogenic activity, restricted to excitatory presynaptic differentiation, acting at both pre- and postsynaptic level. This chain is Leucine-rich repeat transmembrane neuronal protein 1 (LRRTM1), found in Pongo abelii (Sumatran orangutan).